The primary structure comprises 273 residues: Ribosomal RNA small subunit methyltransferase I (273 aa).

The protein belongs to the methyltransferase superfamily. RsmI family.

The protein localises to the cytoplasm. It carries out the reaction cytidine(1402) in 16S rRNA + S-adenosyl-L-methionine = 2'-O-methylcytidine(1402) in 16S rRNA + S-adenosyl-L-homocysteine + H(+). In terms of biological role, catalyzes the 2'-O-methylation of the ribose of cytidine 1402 (C1402) in 16S rRNA. In Xylella fastidiosa (strain Temecula1 / ATCC 700964), this protein is Ribosomal RNA small subunit methyltransferase I.